Consider the following 844-residue polypeptide: Meiosis-specific protein PAIR3 (844 aa).

Disordered regions lie at residues 41–389 (TSSV…RERR), 418–506 (KLSS…RFSD), 532–604 (DDLF…QISI), and 616–669 (WLSD…EPEK). Over residues 106 to 120 (QPDDNAIEQTGTFSF) the composition is skewed to polar residues. Basic and acidic residues-rich tracts occupy residues 122 to 134 (TRREQDSHLDQLD) and 145 to 164 (RQVESADKNKPNSEMLRMKL). Polar residues-rich tracts occupy residues 191–208 (QPKSQIANGPSSGRQKVF) and 218–229 (TPAQFNSQTANK). 2 stretches are compositionally biased toward basic and acidic residues: residues 256 to 270 (RKKEPTGSTHQDKSG) and 324 to 363 (AKVEPKKAHCSDRISHKTTQDDMERKVPSKYIPSEKKGEK). 2 stretches are compositionally biased toward polar residues: residues 364 to 382 (TNSFSSLSRTGKTAESCSR) and 420 to 440 (SSPQLTSFKSKGKCSSISPQQ). The segment covering 441 to 456 (KENDNTHIPEASDRTA) has biased composition (basic and acidic residues). Over residues 459-473 (NSFNSTPSPAANPSP) the composition is skewed to low complexity. Positions 545–554 (RSRSTSFTSD) are enriched in polar residues. Residues 616–640 (WLSDVDSPDKSSIEHLGRKSHLKEG) show a composition bias toward basic and acidic residues. Residues 646-661 (QLTSPTHFATSGTQET) show a composition bias toward polar residues. A coiled-coil region spans residues 731 to 765 (VNAGKSKRKRLESTFEEQQEKLRILHEKFKEEVNQ).

In terms of tissue distribution, expressed in pollen mother cells and the ovule tissues during meiosis.

Its subcellular location is the chromosome. The protein localises to the nucleus. Its function is as follows. Plays a crucial role in homologous chromosome pairing and synapsis in meiosis. Does not seem required for cytokinesis. Is essential for meiotic bouquet formation, homologous chromosome pairing and normal recombination, and synaptonemal complex (SC) assembly. Required for the proper association of PAIR2 with chromosomes. The protein is Meiosis-specific protein PAIR3 of Oryza sativa subsp. japonica (Rice).